The primary structure comprises 358 residues: Heme A synthase (358 aa).

The next 8 membrane-spanning stretches (helical) occupy residues Ile22–Ala42, Val107–Lys127, Ile133–Trp153, Leu172–Gly192, Phe208–Gly228, Phe269–Val289, Ala302–His322, and Val324–Val344. His271 is a heme binding site. His332 is a heme binding site.

This sequence belongs to the COX15/CtaA family. Type 2 subfamily. Interacts with CtaB. Requires heme b as cofactor.

The protein resides in the cell membrane. It catalyses the reaction Fe(II)-heme o + 2 A + H2O = Fe(II)-heme a + 2 AH2. The protein operates within porphyrin-containing compound metabolism; heme A biosynthesis; heme A from heme O: step 1/1. Functionally, catalyzes the conversion of heme O to heme A by two successive hydroxylations of the methyl group at C8. The first hydroxylation forms heme I, the second hydroxylation results in an unstable dihydroxymethyl group, which spontaneously dehydrates, resulting in the formyl group of heme A. The chain is Heme A synthase from Bartonella tribocorum (strain CIP 105476 / IBS 506).